The following is a 355-amino-acid chain: NAD-dependent protein deacylase sirtuin-6 (355 aa).

An N-acetylserine modification is found at serine 2. Serine 10 bears the Phosphoserine mark. Positions 27–272 (PEELERKVWE…TRLMKHLGLE (246 aa)) constitute a Deacetylase sirtuin-type domain. An N6-acetyllysine modification is found at lysine 33. The NAD(+) site is built by alanine 53, threonine 57, phenylalanine 64, arginine 65, tryptophan 71, glutamine 113, and histidine 133. The active-site Proton acceptor is the histidine 133. Zn(2+)-binding residues include cysteine 141, cysteine 144, and cysteine 166. A Glycyl lysine isopeptide (Lys-Gly) (interchain with G-Cter in ubiquitin) cross-link involves residue lysine 170. Cysteine 177 provides a ligand contact to Zn(2+). 5 residues coordinate NAD(+): glycine 214, serine 216, asparagine 240, glutamine 242, and valine 258. The interval 284 to 355 (RALPPLPRPP…KRVKAEAVPS (72 aa)) is disordered. Over residues 287–296 (PPLPRPPTPK) the composition is skewed to pro residues. At threonine 294 the chain carries Phosphothreonine. Phosphoserine is present on residues serine 303 and serine 330.

This sequence belongs to the sirtuin family. Class IV subfamily. Homodimer; binds to nucleosomes and DNA ends as a homodimer. Interacts with RELA; interferes with RELA binding to target DNA. Interacts with SMARCA5; promoting recruitment of SMARCA5/SNF2H to double-strand breaks (DSBs) sites. Interacts with the mTORC2 complex; preventing the ability of SIRT6 to deacetylate FOXO1. Interacts with the CLOCK-BMAL1 complex; recruited by the CLOCK-BMAL1 complex to regulate expression of clock-controlled genes. Interacts with CSNK2A2; preventing CSNK2A2 localization to the nucleus. In terms of processing, acetylated at Lys-33. Deacetylation at Lys-33 by SIRT1 promotes homomultimerization and binding to double-strand breaks (DSBs) sites. Phosphorylation at Ser-10 by MAPK8/JNK1 in response to oxidative stress stimulates the mono-ADP-ribosyltransferase activity on PARP1, leading to PARP1 recruitment to double-strand breaks (DSBs). Post-translationally, monoubiquitinated at Lys-170 by STUB1/CHIP, preventing its degradation by the proteasome. In terms of processing, sumoylated, leading to specifically decrease ability to deacetylate histone H3 at 'Lys-56' (H3K56ac).

It is found in the nucleus. The protein resides in the chromosome. Its subcellular location is the telomere. The protein localises to the endoplasmic reticulum. The catalysed reaction is N(6)-acetyl-L-lysyl-[protein] + NAD(+) + H2O = 2''-O-acetyl-ADP-D-ribose + nicotinamide + L-lysyl-[protein]. It catalyses the reaction N(6)-tetradecanoyl-L-lysyl-[protein] + NAD(+) + H2O = 2''-O-tetradecanoyl-ADP-D-ribose + nicotinamide + L-lysyl-[protein]. The enzyme catalyses N(6)-hexadecanoyl-L-lysyl-[protein] + NAD(+) + H2O = 2''-O-hexadecanoyl-ADP-D-ribose + nicotinamide + L-lysyl-[protein]. It carries out the reaction L-lysyl-[protein] + NAD(+) = N(6)-(ADP-D-ribosyl)-L-lysyl-[protein] + nicotinamide + H(+). The catalysed reaction is L-arginyl-[protein] + NAD(+) = N(omega)-(ADP-D-ribosyl)-L-arginyl-[protein] + nicotinamide + H(+). With respect to regulation, compared to the defatty-acylase activity, the protein deacetylase activity is weak in vitro, and requires activation. The histone deacetylase activity is strongly activated upon binding to nucleosomes and chromatin in vivo. Two molecules of SIRT6 associate with the acidic patch of one nucleosome, while the C-terminal disordered region of SIRT6 associates with nucleosomal DNA, leading to efficient histone deacetylation. The protein-lysine deacetylase activity is also activated by long-chain free fatty-acids. NAD-dependent protein deacetylase, deacylase and mono-ADP-ribosyltransferase that plays an essential role in DNA damage repair, telomere maintenance, metabolic homeostasis, inflammation, tumorigenesis and aging. Displays protein-lysine deacetylase or defatty-acylase (demyristoylase and depalmitoylase) activity, depending on the context. Acts as a key histone deacetylase by catalyzing deacetylation of histone H3 at 'Lys-9', 'Lys-18' and 'Lys-56' (H3K9ac, H3K18ac and H3K56ac, respectively), suppressing target gene expression of several transcription factors, including NF-kappa-B. Acts as an inhibitor of transcription elongation by mediating deacetylation of H3K9ac and H3K56ac, preventing release of NELFE from chromatin and causing transcriptional pausing. Involved in DNA repair by promoting double-strand break (DSB) repair: acts as a DSB sensor by recognizing and binding DSB sites, leading to (1) recruitment of DNA repair proteins, such as SMARCA5/SNF2H, and (2) deacetylation of histone H3K9ac and H3K56ac. SIRT6 participation to DSB repair is probably involved in extension of life span. Also promotes DNA repair by deacetylating non-histone proteins, such as DDB2 and p53/TP53. Specifically deacetylates H3K18ac at pericentric heterochromatin, thereby maintaining pericentric heterochromatin silencing at centromeres and protecting against genomic instability and cellular senescence. Involved in telomere maintenance by catalyzing deacetylation of histone H3 in telomeric chromatin, regulating telomere position effect and telomere movement in response to DNA damage. Required for embryonic stem cell differentiation by mediating histone deacetylation of H3K9ac. Plays a major role in metabolism by regulating processes such as glycolysis, gluconeogenesis, insulin secretion and lipid metabolism. Inhibits glycolysis via histone deacetylase activity and by acting as a corepressor of the transcription factor HIF1A, thereby controlling the expression of multiple glycolytic genes. Has tumor suppressor activity by repressing glycolysis, thereby inhibiting the Warburg effect. Also regulates glycolysis and tumorigenesis by mediating deacetylation and nuclear export of non-histone proteins, such as isoform M2 of PKM (PKM2). Acts as a negative regulator of gluconeogenesis by mediating deacetylation of non-histone proteins, such as FOXO1 and KAT2A/GCN5. Promotes beta-oxidation of fatty acids during fasting by catalyzing deacetylation of NCOA2, inducing coactivation of PPARA. Acts as a regulator of lipid catabolism in brown adipocytes, both by catalyzing deacetylation of histones and non-histone proteins, such as FOXO1. Also acts as a regulator of circadian rhythms, both by regulating expression of clock-controlled genes involved in lipid and carbohydrate metabolism, and by catalyzing deacetylation of PER2. The defatty-acylase activity is specifically involved in regulation of protein secretion. Has high activity toward long-chain fatty acyl groups and mediates protein-lysine demyristoylation and depalmitoylation of target proteins, such as RRAS2 and TNF, thereby regulating their secretion. Also acts as a mono-ADP-ribosyltransferase by mediating mono-ADP-ribosylation of PARP1, TRIM28/KAP1 or SMARCC2/BAF170. Mono-ADP-ribosyltransferase activity is involved in DNA repair, cellular senescence, repression of LINE-1 retrotransposon elements and regulation of transcription. The chain is NAD-dependent protein deacylase sirtuin-6 from Macaca fascicularis (Crab-eating macaque).